The sequence spans 117 residues: Ig heavy chain V region 108A (117 aa).

The signal sequence occupies residues 1–19 (MGWSWIFLFLLSGTAGVHS). Positions 20–117 (EVQLQQSGPE…EDSAVYYCAR (98 aa)) constitute an Ig-like domain.

The chain is Ig heavy chain V region 108A (Igh-VJ558) from Mus musculus (Mouse).